The chain runs to 501 residues: Protein DETOXIFICATION 37 (501 aa).

12 consecutive transmembrane segments (helical) span residues 44 to 64 (MMIEMKFLFHLAAPAIFVYVI), 84 to 104 (LAAASLGNSGFNMFTYGLLLG), 134 to 154 (VVLILTCLPMSFLFLFSNPIL), 163 to 183 (VATLASVFVYGMIPVIFAYAV), 200 to 220 (SAYISAATLVIHLILSWIAVY), 222 to 242 (LGYGLLALSLIHSFSWWIIVV), 280 to 300 (AVMLCLESWYSQILVLLAGLL), 310 to 330 (LAICMSISAISFMVSVGFNAA), 352 to 372 (VVTTGVSFLLSVFEAIVVLSW), 396 to 416 (FLAITIVLNGIQPVLSGVAVG), 422 to 442 (FVAYVNIGCYYVVGIPVGFVL), and 453 to 473 (IWTGMIGGTLMQTIILVIVTL).

It belongs to the multi antimicrobial extrusion (MATE) (TC 2.A.66.1) family.

It is found in the membrane. This Arabidopsis thaliana (Mouse-ear cress) protein is Protein DETOXIFICATION 37.